A 110-amino-acid polypeptide reads, in one-letter code: DNA-binding protein Mhun_3016 (110 aa).

This sequence belongs to the PDCD5 family.

This Methanospirillum hungatei JF-1 (strain ATCC 27890 / DSM 864 / NBRC 100397 / JF-1) protein is DNA-binding protein Mhun_3016.